Consider the following 127-residue polypeptide: LFFYPLDFTFVCPTEIIAFSDRAEEFHQLGCEVLGVSVDXQXTHLAWINTPRKEGGLGPLKIPLLADVTRNLSLDYGVLKEDEGIAYRGLFIIDGKGVLRQITVNDLPVGRXVDEALRLVQGXQYTD.

The Thioredoxin domain occupies 1 to 125; the sequence is LFFYPLDFTF…ALRLVQGXQY (125 aa). The active-site Cysteine sulfenic acid (-SOH) intermediate is the C12. S73 is subject to Phosphoserine.

The protein belongs to the peroxiredoxin family. AhpC/Prx1 subfamily. As to quaternary structure, homodimer; disulfide-linked, upon oxidation. 5 homodimers assemble to form a ring-like decamer. Interacts with TIPIN. In terms of processing, the enzyme can be inactivated by further oxidation of the cysteine sulfenic acid (C(P)-SOH) to sulphinic acid (C(P)-SO2H) instead of its condensation to a disulfide bond. It can be reactivated by forming a transient disulfide bond with sulfiredoxin SRXN1, which reduces the cysteine sulfinic acid in an ATP- and Mg-dependent manner. Acetylation increases resistance to transition to high molecular-mass complexes. Deacetylated by HDAC6 which decreases reducing activity.

The protein localises to the cytoplasm. It carries out the reaction a hydroperoxide + [thioredoxin]-dithiol = an alcohol + [thioredoxin]-disulfide + H2O. In terms of biological role, thiol-specific peroxidase that catalyzes the reduction of hydrogen peroxide and organic hydroperoxides to water and alcohols, respectively. Plays a role in cell protection against oxidative stress by detoxifying peroxides and as sensor of hydrogen peroxide-mediated signaling events. Might participate in the signaling cascades of growth factors and tumor necrosis factor-alpha by regulating the intracellular concentrations of H(2)O(2). The sequence is that of Peroxiredoxin-2 (PRDX2) from Sus scrofa (Pig).